The primary structure comprises 785 residues: Endonuclease MutS2 (785 aa).

335-342 (GPNTGGKT) contributes to the ATP binding site. In terms of domain architecture, Smr spans 710–785 (LDLRGERYED…GNGVTIVEFK (76 aa)).

This sequence belongs to the DNA mismatch repair MutS family. MutS2 subfamily. As to quaternary structure, homodimer. Binds to stalled ribosomes, contacting rRNA.

In terms of biological role, endonuclease that is involved in the suppression of homologous recombination and thus may have a key role in the control of bacterial genetic diversity. Functionally, acts as a ribosome collision sensor, splitting the ribosome into its 2 subunits. Detects stalled/collided 70S ribosomes which it binds and splits by an ATP-hydrolysis driven conformational change. Acts upstream of the ribosome quality control system (RQC), a ribosome-associated complex that mediates the extraction of incompletely synthesized nascent chains from stalled ribosomes and their subsequent degradation. Probably generates substrates for RQC. This is Endonuclease MutS2 from Listeria monocytogenes serotype 4a (strain HCC23).